The primary structure comprises 686 residues: Cation channel sperm-associated protein 1 (686 aa).

Residues 1 to 15 (MDQSSRRDESYHETH) show a composition bias toward basic and acidic residues. Disordered regions lie at residues 1 to 57 (MDQS…QQPY), 97 to 177 (TLPN…NRDH), 207 to 271 (DHHH…KSTA), and 289 to 318 (QSRE…RAHK). At 1–351 (MDQSSRRDES…QMILSLTQSL (351 aa)) the chain is on the cytoplasmic side. Positions 25–35 (SHPHPHPHPTL) are enriched in basic residues. Residues 128–142 (DPNHHPHQDDPHRPS) are compositionally biased toward basic and acidic residues. Positions 147–160 (HPSSTGSHQGTTHQ) are enriched in polar residues. Composition is skewed to basic residues over residues 211–229 (EGHH…KEQR) and 235–244 (HMHHHIHHRS). The segment covering 245 to 271 (PSASQLSHKSHSTLATSPSHVGSKSTA) has biased composition (polar residues). Residues 308-318 (QKRKKAQRAHK) show a composition bias toward basic residues. The helical transmembrane segment at 352 to 373 (GFETFIFIVVCLNTVILVAQTF) threads the bilayer. Residues 374 to 382 (TELEIRGEW) are Extracellular-facing. The helical transmembrane segment at 383–404 (YFMVLDSIFLSIYVLEAVLKLI) threads the bilayer. The Cytoplasmic portion of the chain corresponds to 405 to 412 (ALGLEYFY). A helical transmembrane segment spans residues 413–435 (DPWNNLDFFIMVMAVLDFVLLQI). Residues 436-446 (NSLSYSFYNHS) are Extracellular-facing. The chain crosses the membrane as a helical span at residues 447 to 469 (LFRILKVFKSMRALRAIRVLRRL). The Cytoplasmic portion of the chain corresponds to 470-487 (SILTSLHEVAGTLSGSLP). The chain crosses the membrane as a helical span at residues 488–510 (SITAILTLMFTCLFLFSVVLRAL). The Extracellular portion of the chain corresponds to 511–521 (FQDSDPKRFQN). Positions 522–534 (IFTTLFTLFTMLT) form an intramembrane region, helical; Pore-forming. Residues 535–551 (LDDWSLIYIDNRAQGAW) are Extracellular-facing. The chain crosses the membrane as a helical span at residues 552-577 (YIIPILMIYIVIQYFIFLNLVIAVLV). At 578–686 (DNFQMALLKG…FEAGDDDYGK (109 aa)) the chain is on the cytoplasmic side.

This sequence belongs to the cation channel sperm-associated (TC 1.A.1.19) family. In terms of assembly, component of the CatSper complex or CatSpermasome composed of the core pore-forming members CATSPER1, CATSPER2, CATSPER3 and CATSPER4 as well as auxiliary members CATSPERB, CATSPERG2, CATSPERD, CATSPERE, CATSPERZ, C2CD6/CATSPERT, SLCO6C1, TMEM249, TMEM262 and EFCAB9. HSPA1 may be an additional auxiliary complex member. The core complex members CATSPER1, CATSPER2, CATSPER3 and CATSPER4 form a heterotetrameric channel. The auxiliary CATSPERB, CATSPERG2, CATSPERD and CATSPERE subunits form a pavilion-like structure over the pore which stabilizes the complex through interactions with CATSPER4, CATSPER3, CATSPER1 and CATSPER2 respectively. SLCO6C1 interacts with CATSPERE, and TMEM262/CATSPERH interacts with CATSPERB, further stabilizing the complex. C2CD6/CATSPERT interacts at least with CATSPERD and is required for targeting the CatSper complex in the flagellar membrane. Interacts with Ca(v)3.3/CACNA1I, leading to suppression of T-type calcium channel activity. Testis-specific.

It localises to the cell projection. The protein resides in the cilium. It is found in the flagellum membrane. It catalyses the reaction Ca(2+)(in) = Ca(2+)(out). Activated by intracellular alkalinization. In contrast to the human ortholog, not activated by progesterone. Pore-forming subunit of the CatSper complex, a sperm-specific voltage-gated calcium channel that plays a central role in sperm cell hyperactivation. Controls calcium entry to mediate the hyperactivated motility, a step needed for sperm motility which is essential late in the preparation of sperm for fertilization. The sequence is that of Cation channel sperm-associated protein 1 (Catsper1) from Mus musculus (Mouse).